Here is a 399-residue protein sequence, read N- to C-terminus: Phosphoprotein (399 aa).

2 stretches are compositionally biased toward polar residues: residues A30–T46 and G82–P112. The segment at A30 to P112 is disordered. The multimerization stretch occupies residues N224–G287. Residues A226–T253 adopt a coiled-coil conformation.

It belongs to the rubulavirus/avulavirus P protein family. Homotetramer. Interacts (via multimerization domain) with polymerase L; this interaction forms the polymerase L-P complex. Interacts (via N-terminus) with N0 (via Ncore); this interaction allows P to chaperon N0 to avoid N polymerization before encapsidation. Interacts (via C-terminus) with N-RNA template; this interaction positions the polymerase on the template for both transcription and replication.

In terms of biological role, essential cofactor of the RNA polymerase L that plays a central role in the transcription and replication by forming the polymerase complex with RNA polymerase L and recruiting L to the genomic N-RNA template for RNA synthesis. Also plays a central role in the encapsidation of nascent RNA chains by forming the encapsidation complex with the nucleocapsid protein N (N-P complex). Acts as a chaperone for newly synthesized free N protein, so-called N0, allowing encapsidation of nascent RNA chains during replication. The nucleoprotein protein N prevents excessive phosphorylation of P, which leads to down-regulation of viral transcription/ replication. Participates, together with N, in the formation of viral factories (viroplasms), which are large inclusions in the host cytoplasm where replication takes place. This Human parainfluenza 4a virus (strain Toshiba) (HPIV-4a) protein is Phosphoprotein (P/V).